A 475-amino-acid chain; its full sequence is Ras-GEF domain-containing family member 1B-B (475 aa).

Residues 1–19 show a composition bias toward polar residues; it reads MPQTTPYSSKFNPSAYSSS. The disordered stretch occupies residues 1–25; it reads MPQTTPYSSKFNPSAYSSSHSHRQP. Residues 36-166 form the N-terminal Ras-GEF domain; it reads RDNKLVSGSL…LIQRLLRKLT (131 aa). Positions 209–456 constitute a Ras-GEF domain; the sequence is DPFIFAQQLT…QLASYESEGP (248 aa). The interval 452–475 is disordered; that stretch reads ESEGPENNLERDTRRSLRSSLSRM.

Its function is as follows. Guanine nucleotide exchange factor (GEF) for Ras family proteins. The sequence is that of Ras-GEF domain-containing family member 1B-B from Danio rerio (Zebrafish).